A 360-amino-acid polypeptide reads, in one-letter code: Phospho-N-acetylmuramoyl-pentapeptide-transferase (360 aa).

Transmembrane regions (helical) follow at residues 26–46 (AILG…WVIN), 70–90 (GTPT…TLLW), 97–117 (YVLA…VDDY), 134–154 (YFWQ…TAQI), 167–187 (GVAL…VVGF), 199–219 (GLAI…AYLV), 236–256 (AGEL…FLWF), 263–283 (VFMG…IAVI), 288–308 (IVFI…ILQV), and 338–358 (VIVR…ATLK).

This sequence belongs to the glycosyltransferase 4 family. MraY subfamily. The cofactor is Mg(2+).

The protein resides in the cell inner membrane. The catalysed reaction is UDP-N-acetyl-alpha-D-muramoyl-L-alanyl-gamma-D-glutamyl-meso-2,6-diaminopimeloyl-D-alanyl-D-alanine + di-trans,octa-cis-undecaprenyl phosphate = di-trans,octa-cis-undecaprenyl diphospho-N-acetyl-alpha-D-muramoyl-L-alanyl-D-glutamyl-meso-2,6-diaminopimeloyl-D-alanyl-D-alanine + UMP. Its pathway is cell wall biogenesis; peptidoglycan biosynthesis. Functionally, catalyzes the initial step of the lipid cycle reactions in the biosynthesis of the cell wall peptidoglycan: transfers peptidoglycan precursor phospho-MurNAc-pentapeptide from UDP-MurNAc-pentapeptide onto the lipid carrier undecaprenyl phosphate, yielding undecaprenyl-pyrophosphoryl-MurNAc-pentapeptide, known as lipid I. This chain is Phospho-N-acetylmuramoyl-pentapeptide-transferase, found in Saccharophagus degradans (strain 2-40 / ATCC 43961 / DSM 17024).